Consider the following 535-residue polypeptide: Probable acyl-activating enzyme 22 (535 aa).

This sequence belongs to the ATP-dependent AMP-binding enzyme family.

Functionally, may act as an acid--thiol ligase that activates carboxylic acids by forming acyl-CoAs. The polypeptide is Probable acyl-activating enzyme 22 (AEE22) (Arabidopsis thaliana (Mouse-ear cress)).